Consider the following 197-residue polypeptide: Imidazoleglycerol-phosphate dehydratase (197 aa).

The protein belongs to the imidazoleglycerol-phosphate dehydratase family.

The protein localises to the cytoplasm. It carries out the reaction D-erythro-1-(imidazol-4-yl)glycerol 3-phosphate = 3-(imidazol-4-yl)-2-oxopropyl phosphate + H2O. It participates in amino-acid biosynthesis; L-histidine biosynthesis; L-histidine from 5-phospho-alpha-D-ribose 1-diphosphate: step 6/9. The sequence is that of Imidazoleglycerol-phosphate dehydratase from Bradyrhizobium diazoefficiens (strain JCM 10833 / BCRC 13528 / IAM 13628 / NBRC 14792 / USDA 110).